The following is a 118-amino-acid chain: uncharacterized protein (118 aa).

Transmembrane regions (helical) follow at residues 12-32 (IISL…FATF), 39-59 (LMPH…SLFI), 63-83 (IIGY…CPTI), and 98-118 (SAHL…VILF).

Its subcellular location is the cell membrane. This is an uncharacterized protein from Methanocaldococcus jannaschii (strain ATCC 43067 / DSM 2661 / JAL-1 / JCM 10045 / NBRC 100440) (Methanococcus jannaschii).